We begin with the raw amino-acid sequence, 131 residues long: Ribonuclease P protein component (131 aa).

Belongs to the RnpA family. As to quaternary structure, consists of a catalytic RNA component (M1 or rnpB) and a protein subunit.

The catalysed reaction is Endonucleolytic cleavage of RNA, removing 5'-extranucleotides from tRNA precursor.. Its function is as follows. RNaseP catalyzes the removal of the 5'-leader sequence from pre-tRNA to produce the mature 5'-terminus. It can also cleave other RNA substrates such as 4.5S RNA. The protein component plays an auxiliary but essential role in vivo by binding to the 5'-leader sequence and broadening the substrate specificity of the ribozyme. This Cyanothece sp. (strain PCC 7425 / ATCC 29141) protein is Ribonuclease P protein component.